The sequence spans 399 residues: S-adenosylmethionine synthase (399 aa).

His-16 is a binding site for ATP. Asp-18 provides a ligand contact to Mg(2+). K(+) is bound at residue Glu-44. The L-methionine site is built by Glu-57 and Gln-100. Residues 100–110 (QSPDIAQGVDD) form a flexible loop region. Residues 174–176 (DAK), 241–242 (RF), Asp-250, 256–257 (RK), Ala-273, and Lys-277 each bind ATP. Asp-250 provides a ligand contact to L-methionine. Lys-281 contacts L-methionine.

It belongs to the AdoMet synthase family. As to quaternary structure, homotetramer; dimer of dimers. Mg(2+) is required as a cofactor. It depends on K(+) as a cofactor.

It is found in the cytoplasm. The enzyme catalyses L-methionine + ATP + H2O = S-adenosyl-L-methionine + phosphate + diphosphate. Its pathway is amino-acid biosynthesis; S-adenosyl-L-methionine biosynthesis; S-adenosyl-L-methionine from L-methionine: step 1/1. In terms of biological role, catalyzes the formation of S-adenosylmethionine (AdoMet) from methionine and ATP. The overall synthetic reaction is composed of two sequential steps, AdoMet formation and the subsequent tripolyphosphate hydrolysis which occurs prior to release of AdoMet from the enzyme. This Latilactobacillus sakei subsp. sakei (strain 23K) (Lactobacillus sakei subsp. sakei) protein is S-adenosylmethionine synthase.